The primary structure comprises 120 residues: Large ribosomal subunit protein bL12 (120 aa).

The segment covering 95–112 (KEGVSKEEAEEVQGKLEE) has biased composition (basic and acidic residues). Positions 95 to 120 (KEGVSKEEAEEVQGKLEEAGASVEVK) are disordered.

The protein belongs to the bacterial ribosomal protein bL12 family. As to quaternary structure, homodimer. Part of the ribosomal stalk of the 50S ribosomal subunit. Forms a multimeric L10(L12)X complex, where L10 forms an elongated spine to which 2 to 4 L12 dimers bind in a sequential fashion. Binds GTP-bound translation factors.

Its function is as follows. Forms part of the ribosomal stalk which helps the ribosome interact with GTP-bound translation factors. Is thus essential for accurate translation. The polypeptide is Large ribosomal subunit protein bL12 (Oceanobacillus iheyensis (strain DSM 14371 / CIP 107618 / JCM 11309 / KCTC 3954 / HTE831)).